The primary structure comprises 492 residues: N-succinylglutamate 5-semialdehyde dehydrogenase (492 aa).

NAD(+) is bound at residue 220–225; that stretch reads GSASTG. Active-site residues include Glu243 and Cys277.

This sequence belongs to the aldehyde dehydrogenase family. AstD subfamily.

The enzyme catalyses N-succinyl-L-glutamate 5-semialdehyde + NAD(+) + H2O = N-succinyl-L-glutamate + NADH + 2 H(+). The protein operates within amino-acid degradation; L-arginine degradation via AST pathway; L-glutamate and succinate from L-arginine: step 4/5. Functionally, catalyzes the NAD-dependent reduction of succinylglutamate semialdehyde into succinylglutamate. The chain is N-succinylglutamate 5-semialdehyde dehydrogenase from Salmonella paratyphi C (strain RKS4594).